A 479-amino-acid chain; its full sequence is Sulfate adenylyltransferase subunit 1 (479 aa).

Residues 25-239 (KSLLRFLTCG…EVLETVDIQR (215 aa)) enclose the tr-type G domain. Positions 34-41 (GSVDDGKS) are G1. A GTP-binding site is contributed by 34–41 (GSVDDGKS). Residues 92-96 (GITID) form a G2 region. The G3 stretch occupies residues 113-116 (DTPG). Residues 113-117 (DTPGH) and 168-171 (NKMD) each bind GTP. Residues 168–171 (NKMD) are G4. The segment at 206-208 (SAL) is G5.

This sequence belongs to the TRAFAC class translation factor GTPase superfamily. Classic translation factor GTPase family. CysN/NodQ subfamily. Heterodimer composed of CysD, the smaller subunit, and CysN.

The enzyme catalyses sulfate + ATP + H(+) = adenosine 5'-phosphosulfate + diphosphate. It functions in the pathway sulfur metabolism; hydrogen sulfide biosynthesis; sulfite from sulfate: step 1/3. In terms of biological role, with CysD forms the ATP sulfurylase (ATPS) that catalyzes the adenylation of sulfate producing adenosine 5'-phosphosulfate (APS) and diphosphate, the first enzymatic step in sulfur assimilation pathway. APS synthesis involves the formation of a high-energy phosphoric-sulfuric acid anhydride bond driven by GTP hydrolysis by CysN coupled to ATP hydrolysis by CysD. The chain is Sulfate adenylyltransferase subunit 1 from Salmonella heidelberg (strain SL476).